A 207-amino-acid polypeptide reads, in one-letter code: MSYQENNAMPSIMDALVPMVVEQTSRGERSYDIYSRLLKERVIFLTGQVEDHMANLVVAQLLFLESENPDKDIFLYINSPGGSVTAGMSIYDTMQFIKPNVSTVCMGQACSMGAFLLAGGAPGKRYVLPNSRVMIHQPLGGFQGQASDIQIHAQEILTIKKKLNTLLAEHTGQPLEVIEQDTDRDNFMSADDAVKYGLVDAVLNKRD.

Serine 111 functions as the Nucleophile in the catalytic mechanism. Histidine 136 is an active-site residue.

Belongs to the peptidase S14 family. As to quaternary structure, fourteen ClpP subunits assemble into 2 heptameric rings which stack back to back to give a disk-like structure with a central cavity, resembling the structure of eukaryotic proteasomes.

It is found in the cytoplasm. The catalysed reaction is Hydrolysis of proteins to small peptides in the presence of ATP and magnesium. alpha-casein is the usual test substrate. In the absence of ATP, only oligopeptides shorter than five residues are hydrolyzed (such as succinyl-Leu-Tyr-|-NHMec, and Leu-Tyr-Leu-|-Tyr-Trp, in which cleavage of the -Tyr-|-Leu- and -Tyr-|-Trp bonds also occurs).. In terms of biological role, cleaves peptides in various proteins in a process that requires ATP hydrolysis. Has a chymotrypsin-like activity. Plays a major role in the degradation of misfolded proteins. The sequence is that of ATP-dependent Clp protease proteolytic subunit from Aliivibrio fischeri (strain ATCC 700601 / ES114) (Vibrio fischeri).